The chain runs to 1893 residues: Endoribonuclease Dicer (1893 aa).

The Helicase ATP-binding domain maps to 41-217 (LLEAALDHNT…DLEEKIQKLE (177 aa)). 54–61 (LNSGSGKT) serves as a coordination point for ATP. The DECH box signature appears at 165–168 (DECH). Residues 400–424 (VSWSDSEDDDDEDEEIEEKEKTETS) form a disordered region. Over residues 404 to 416 (DSEDDDDEDEEIE) the composition is skewed to acidic residues. In terms of domain architecture, Helicase C-terminal spans 424–593 (SFPSPFTNIL…SIDCGNTESE (170 aa)). In terms of domain architecture, Dicer dsRNA-binding fold spans 621–713 (AIGHINRYCA…MPVGKETVKY (93 aa)). Positions 718–737 (DLHDEEETSVPGRPGSTKRR) are disordered. The PAZ domain occupies 886–1036 (KFVEDIEKSE…LVPELCAIHP (151 aa)). RNase III domains are found at residues 1249–1380 (TSDM…ETSG) and 1637–1795 (FENF…MDSG). Mg(2+) is bound by residues Glu-1293, Asp-1371, Glu-1374, Glu-1676, Asp-1781, and Glu-1784. The DRBM domain maps to 1820–1885 (VPRSPVRELL…ARRALRSLKA (66 aa)).

It belongs to the helicase family. Dicer subfamily. As to quaternary structure, component of the RISC loading complex (RLC), or micro-RNA (miRNA) loading complex (miRLC), which is composed of dicer1, ago2 and tarbp2; dicer1 and tarbp2 are required to process precursor miRNAs (pre-miRNAs) to mature miRNAs and then load them onto ago2. Note that the trimeric RLC/miRLC is also referred to as RISC. Mg(2+) is required as a cofactor. It depends on Mn(2+) as a cofactor.

The protein localises to the cytoplasm. It carries out the reaction Endonucleolytic cleavage to 5'-phosphomonoester.. Its function is as follows. Double-stranded RNA (dsRNA) endoribonuclease playing a central role in short dsRNA-mediated post-transcriptional gene silencing. Cleaves naturally occurring long dsRNAs and short hairpin pre-microRNAs (miRNA) into fragments of twenty-one to twenty-three nucleotides with 3' overhang of two nucleotides, producing respectively short interfering RNAs (siRNA) and mature microRNAs. SiRNAs and miRNAs serve as guide to direct the RNA-induced silencing complex (RISC) to complementary RNAs to degrade them or prevent their translation. Gene silencing mediated by siRNAs, also called RNA interference, controls the elimination of transcripts from mobile and repetitive DNA elements of the genome but also the degradation of exogenous RNA of viral origin for instance. The miRNA pathway on the other side is a mean to specifically regulate the expression of target genes. The sequence is that of Endoribonuclease Dicer (dicer1) from Xenopus tropicalis (Western clawed frog).